A 435-amino-acid polypeptide reads, in one-letter code: Cytokine-dependent hematopoietic cell linker (435 aa).

2 positions are modified to phosphotyrosine; by LYN: Y69 and Y96. The disordered stretch occupies residues 155–303; the sequence is KINKTPLPPP…PDPTKPDEKD (149 aa). The interval 160–165 is mediates interaction with PLCG1; essential for BCR signaling; involved in restoration of BCR-induced calcium response and ERK2 and JNK2 activation in BLNK-deficient cells expressing LAT; sequence PLPPPR. Residues 178 to 182 form a mediates interaction with LAT, GRB2, and FGR; involved in translocation to the glycolipid-enriched microdomain and restoration of BCR-induced calcium response in BLNK-deficient DT40 cells expressing LAT region; sequence PPAPP. Over residues 226-249 the composition is skewed to polar residues; it reads PESSCPSSNQNTQKSPPAIASSSY. Residues 290-303 are compositionally biased toward basic and acidic residues; the sequence is NSEKPDPTKPDEKD. Positions 309-418 constitute an SH2 domain; it reads WYIGEYSRQA…RKQCYLTQPL (110 aa).

When phosphorylated, interacts with PLCG1, PLCG2, GRB2, VAV and LAT. Associated with a tyrosine-phosphorylated polypeptide (p92) in response to immunoreceptor stimulation. Interacts with LBR and AGO2. Interacts with FGR. Part of a complex consisting of CLNK, SKAP1 and FYB1. Interacts (via SH2 domain) with FYB1; this interaction allows SKAP1 and FYB1 to promote tyrosine phosphorylation of CLNK by LYN. Interacts (via SH2 domain) with MAP4K1. Tyrosine-phosphorylated upon BCR cross-linking. Tyrosine phosphorylation at both Tyr-69 and Tyr-96 are required for BCR-induced calcium response and are essential to restore PLCG2-mediated signaling in BLNK-deficient DT40 cells, but this phosphorylation is dispensable in cells expressing LAT. Interacts with the SH2 domain of PLCG1 via phosphorylated Tyr-96. Tyrosine phosphorylation is increased when complexed with SKAP1 and FYB1. Expressed in T-cells, mast cells, natural killer and natural killer T cells (at protein level). Expressed in cytokine-stimulated hemopoietic cells.

The protein localises to the cytoplasm. Functionally, an adapter protein which plays a role in the regulation of immunoreceptor signaling, including PLC-gamma-mediated B-cell antigen receptor (BCR) signaling and FC-epsilon R1-mediated mast cell degranulation. Together with FGR, it acts as a negative regulator of natural killer cell-activating receptors and inhibits interferon-gamma production. Acts as a positive regulator of both T-cell receptor and natural killer T (NKT) cell receptor signaling in CD4-positive NKT cells. Together with MAP4K1, it enhances CD3-triggered activation of T-cells and subsequent IL2 production. May be involved in tumor necrosis factor induced cell death by promoting reactive oxidative species generation, and MLKL oligomerization, ultimately leading to necrosis. Involved in phosphorylation of LAT. May be involved in high affinity immunoglobulin epsilon receptor signaling in mast cells. The protein is Cytokine-dependent hematopoietic cell linker (Clnk) of Mus musculus (Mouse).